A 359-amino-acid polypeptide reads, in one-letter code: UPF0283 membrane protein RL2646 (359 aa).

Residues 1 to 48 (MSKPPSDPPRRAPAAFIYEDEATERRDNGRQGGERRKPESFSEHIVVT) are disordered. A compositionally biased stretch (basic and acidic residues) spans 23-42 (TERRDNGRQGGERRKPESFS). Transmembrane regions (helical) follow at residues 77–97 (FGKI…GLWT) and 111–131 (LGYA…ALVI).

The protein belongs to the UPF0283 family.

It is found in the cell inner membrane. This is UPF0283 membrane protein RL2646 from Rhizobium johnstonii (strain DSM 114642 / LMG 32736 / 3841) (Rhizobium leguminosarum bv. viciae).